The following is a 473-amino-acid chain: Cysteine--tRNA ligase (473 aa).

Cysteine 30 is a binding site for Zn(2+). A 'HIGH' region motif is present at residues 32 to 42 (MTVYDYCHIGH). Positions 213, 238, and 242 each coordinate Zn(2+). A 'KMSKS' region motif is present at residues 270-274 (KMSKS). Lysine 273 provides a ligand contact to ATP.

Belongs to the class-I aminoacyl-tRNA synthetase family. In terms of assembly, monomer. Zn(2+) serves as cofactor.

It localises to the cytoplasm. It carries out the reaction tRNA(Cys) + L-cysteine + ATP = L-cysteinyl-tRNA(Cys) + AMP + diphosphate. This Acinetobacter baumannii (strain SDF) protein is Cysteine--tRNA ligase.